A 585-amino-acid polypeptide reads, in one-letter code: Probable G-protein coupled receptor Mth-like 10 (585 aa).

The signal sequence occupies residues 1–32 (MPKKIHQPGGSLYCGVTLLGVLCLVVFRLIPG). Residues 33 to 250 (IPFGTYVMAE…DHSTVKIINS (218 aa)) lie on the Extracellular side of the membrane. Cystine bridges form between C56-C110, C112-C117, C121-C216, C122-C135, and C177-C236. 2 N-linked (GlcNAc...) asparagine glycosylation sites follow: N63 and N72. Residues N142, N152, N157, N198, and N223 are each glycosylated (N-linked (GlcNAc...) asparagine). A helical transmembrane segment spans residues 251 to 271 (YAMMFSIPFMMLTIAVYLLIP). The Cytoplasmic portion of the chain corresponds to 272 to 280 (ELRNQHGKS). Residues 281–301 (LVCYLIGLSVGYSSLCYVQLY) form a helical membrane-spanning segment. The Extracellular segment spans residues 302 to 312 (QVDATGVTCKV). A helical transmembrane segment spans residues 313–333 (FGYTAYFFFMGAYMWLSVISF). The Cytoplasmic portion of the chain corresponds to 334-353 (DLWHNFRGTRGINRFQEKKR). A helical membrane pass occupies residues 354–374 (FLFYSLYSWGIALVFLAFTYC). The Extracellular portion of the chain corresponds to 375–404 (AQQLTNLPANLKPGIGDGVYCWLDMSNWAA). Residues 405–425 (MIYFYGPILAIVVANTIMFIM) form a helical membrane-spanning segment. Residues 426–466 (TAIKIHGVQREMARIIASENSTKNLRTEKDKRFYRAWSNYR) lie on the Cytoplasmic side of the membrane. Residues 467-487 (FGLFLRLFLIMGITWLTELIS) traverse the membrane as a helical segment. The Extracellular portion of the chain corresponds to 488-498 (YFVGSDKGWSK). The helical transmembrane segment at 499 to 519 (LFYISDLANAMQGFLIFMLFV) threads the bilayer. The Cytoplasmic segment spans residues 520 to 585 (MKKKVKHLIT…VDPQKTTIFR (66 aa)).

The protein belongs to the G-protein coupled receptor 2 family. Mth subfamily.

Its subcellular location is the cell membrane. This chain is Probable G-protein coupled receptor Mth-like 10 (mthl10), found in Drosophila melanogaster (Fruit fly).